Here is a 359-residue protein sequence, read N- to C-terminus: Histidinol-phosphate aminotransferase (359 aa).

Position 217 is an N6-(pyridoxal phosphate)lysine (lysine 217).

It belongs to the class-II pyridoxal-phosphate-dependent aminotransferase family. Histidinol-phosphate aminotransferase subfamily. In terms of assembly, homodimer. Requires pyridoxal 5'-phosphate as cofactor.

The enzyme catalyses L-histidinol phosphate + 2-oxoglutarate = 3-(imidazol-4-yl)-2-oxopropyl phosphate + L-glutamate. Its pathway is amino-acid biosynthesis; L-histidine biosynthesis; L-histidine from 5-phospho-alpha-D-ribose 1-diphosphate: step 7/9. The chain is Histidinol-phosphate aminotransferase from Salmonella paratyphi A (strain ATCC 9150 / SARB42).